Consider the following 341-residue polypeptide: 4-hydroxy-2-oxovalerate aldolase (341 aa).

Residues 9–260 (VVITDSTLRD…ATGIDLYRVL (252 aa)) enclose the Pyruvate carboxyltransferase domain. Position 17-18 (17-18 (RD)) interacts with substrate. Asp-18 is a binding site for Mn(2+). The active-site Proton acceptor is the His-21. Ser-172 and His-199 together coordinate substrate. The Mn(2+) site is built by His-199 and His-201.

It belongs to the 4-hydroxy-2-oxovalerate aldolase family.

It carries out the reaction (S)-4-hydroxy-2-oxopentanoate = acetaldehyde + pyruvate. This Spirochaeta aurantia protein is 4-hydroxy-2-oxovalerate aldolase.